We begin with the raw amino-acid sequence, 398 residues long: 1-deoxy-D-xylulose 5-phosphate reductoisomerase (398 aa).

Positions 11, 12, 13, 14, 38, 39, and 125 each coordinate NADPH. Lys126 contributes to the 1-deoxy-D-xylulose 5-phosphate binding site. Glu127 provides a ligand contact to NADPH. Asp151 lines the Mn(2+) pocket. The 1-deoxy-D-xylulose 5-phosphate site is built by Ser152, Glu153, Ser179, and His202. A Mn(2+)-binding site is contributed by Glu153. An NADPH-binding site is contributed by Gly208. Positions 215, 220, 221, and 224 each coordinate 1-deoxy-D-xylulose 5-phosphate. A Mn(2+)-binding site is contributed by Glu224.

This sequence belongs to the DXR family. Mg(2+) is required as a cofactor. It depends on Mn(2+) as a cofactor.

The catalysed reaction is 2-C-methyl-D-erythritol 4-phosphate + NADP(+) = 1-deoxy-D-xylulose 5-phosphate + NADPH + H(+). Its pathway is isoprenoid biosynthesis; isopentenyl diphosphate biosynthesis via DXP pathway; isopentenyl diphosphate from 1-deoxy-D-xylulose 5-phosphate: step 1/6. Its function is as follows. Catalyzes the NADPH-dependent rearrangement and reduction of 1-deoxy-D-xylulose-5-phosphate (DXP) to 2-C-methyl-D-erythritol 4-phosphate (MEP). This Burkholderia pseudomallei (strain 1106a) protein is 1-deoxy-D-xylulose 5-phosphate reductoisomerase.